The chain runs to 310 residues: Ribosomal RNA small subunit methyltransferase H (310 aa).

S-adenosyl-L-methionine contacts are provided by residues 32 to 34 (GGH), aspartate 52, phenylalanine 79, aspartate 100, and glutamine 107.

The protein belongs to the methyltransferase superfamily. RsmH family.

Its subcellular location is the cytoplasm. It carries out the reaction cytidine(1402) in 16S rRNA + S-adenosyl-L-methionine = N(4)-methylcytidine(1402) in 16S rRNA + S-adenosyl-L-homocysteine + H(+). Specifically methylates the N4 position of cytidine in position 1402 (C1402) of 16S rRNA. The chain is Ribosomal RNA small subunit methyltransferase H from Bacillus anthracis (strain A0248).